The primary structure comprises 446 residues: tRNA-2-methylthio-N(6)-dimethylallyladenosine synthase (446 aa).

The region spanning 3-120 (KKLFIETHGC…LPEMIDAARS (118 aa)) is the MTTase N-terminal domain. Positions 12, 49, 83, 157, 161, and 164 each coordinate [4Fe-4S] cluster. The Radical SAM core domain maps to 143-375 (RVDGPTAFVS…QGRIHQQGYE (233 aa)). A TRAM domain is found at 378 to 442 (RRMVGSTQRI…PHSLRGTLIE (65 aa)).

It belongs to the methylthiotransferase family. MiaB subfamily. As to quaternary structure, monomer. The cofactor is [4Fe-4S] cluster.

Its subcellular location is the cytoplasm. The enzyme catalyses N(6)-dimethylallyladenosine(37) in tRNA + (sulfur carrier)-SH + AH2 + 2 S-adenosyl-L-methionine = 2-methylsulfanyl-N(6)-dimethylallyladenosine(37) in tRNA + (sulfur carrier)-H + 5'-deoxyadenosine + L-methionine + A + S-adenosyl-L-homocysteine + 2 H(+). Its function is as follows. Catalyzes the methylthiolation of N6-(dimethylallyl)adenosine (i(6)A), leading to the formation of 2-methylthio-N6-(dimethylallyl)adenosine (ms(2)i(6)A) at position 37 in tRNAs that read codons beginning with uridine. In Pseudomonas paraeruginosa (strain DSM 24068 / PA7) (Pseudomonas aeruginosa (strain PA7)), this protein is tRNA-2-methylthio-N(6)-dimethylallyladenosine synthase.